Consider the following 297-residue polypeptide: ER membrane protein complex subunit 2 (297 aa).

At Ala2 the chain carries N-acetylalanine. TPR repeat units lie at residues His87 to Asn120, Gln155 to Asn188, and Cys192 to Asn225. Position 255 is an N6-acetyllysine (Lys255).

The protein belongs to the EMC2 family. Component of the ER membrane protein complex (EMC). Interacts with WNK1 (via amphipathic alpha-helix region); promoting the ER membrane protein complex assembly by preventing EMC2 ubiquitination. In terms of processing, ubiquitinated when soluble in the cytoplasm, leading to its degradation by the proteasome. Interaction with EMC2 prevents its ubiquitination and degradation.

Its subcellular location is the endoplasmic reticulum membrane. Its function is as follows. Part of the endoplasmic reticulum membrane protein complex (EMC) that enables the energy-independent insertion into endoplasmic reticulum membranes of newly synthesized membrane proteins. Preferentially accommodates proteins with transmembrane domains that are weakly hydrophobic or contain destabilizing features such as charged and aromatic residues. Involved in the cotranslational insertion of multi-pass membrane proteins in which stop-transfer membrane-anchor sequences become ER membrane spanning helices. It is also required for the post-translational insertion of tail-anchored/TA proteins in endoplasmic reticulum membranes. By mediating the proper cotranslational insertion of N-terminal transmembrane domains in an N-exo topology, with translocated N-terminus in the lumen of the ER, controls the topology of multi-pass membrane proteins like the G protein-coupled receptors. By regulating the insertion of various proteins in membranes, it is indirectly involved in many cellular processes. In Pongo abelii (Sumatran orangutan), this protein is ER membrane protein complex subunit 2.